We begin with the raw amino-acid sequence, 249 residues long: MKHNASSALLSAFQGLRISSSATPFRAASLATSAVRRPIAPTPVSVASHVRLFSATAIQAGSWLEPNLNRKKKMMKGRPRVPTGGSTKGTTVVWGDYGLRMRDHHRRISAQQLKLAEDTIKQRLRGQKYRLYKRVACNVGVYVSGNEMRMGKGKGSFDHWATRVAVNQIIFEIRGQLHEQVIRDAFRLAGHKLPGLYEFVKKGDPPVVGITKLEDGLTVEDLKNPRKKLLMPEITQSAASTSSTAAPPS.

It belongs to the universal ribosomal protein uL16 family. Component of the mitochondrial large ribosomal subunit (mt-LSU). Mature N.crassa 74S mitochondrial ribosomes consist of a small (37S) and a large (54S) subunit. The 37S small subunit contains a 16S ribosomal RNA (16S mt-rRNA) and 32 different proteins. The 54S large subunit contains a 23S rRNA (23S mt-rRNA) and 42 different proteins.

The protein localises to the mitochondrion. Component of the mitochondrial ribosome (mitoribosome), a dedicated translation machinery responsible for the synthesis of mitochondrial genome-encoded proteins, including at least some of the essential transmembrane subunits of the mitochondrial respiratory chain. The mitoribosomes are attached to the mitochondrial inner membrane and translation products are cotranslationally integrated into the membrane. In Neurospora crassa (strain ATCC 24698 / 74-OR23-1A / CBS 708.71 / DSM 1257 / FGSC 987), this protein is Large ribosomal subunit protein uL16m (mrpl16).